The chain runs to 396 residues: Elongation factor Tu (396 aa).

The region spanning 10 to 205 (KSHANIGTIG…AVDEYIPTPE (196 aa)) is the tr-type G domain. The segment at 19–26 (GHVDHGKT) is G1. 19 to 26 (GHVDHGKT) contributes to the GTP binding site. T26 contributes to the Mg(2+) binding site. The tract at residues 61–65 (GITIS) is G2. The interval 82–85 (DCPG) is G3. Residues 82 to 86 (DCPGH) and 137 to 140 (NKCD) each bind GTP. The tract at residues 137-140 (NKCD) is G4. Residues 175-177 (SAL) form a G5 region. T385 carries the phosphothreonine modification.

Belongs to the TRAFAC class translation factor GTPase superfamily. Classic translation factor GTPase family. EF-Tu/EF-1A subfamily. In terms of assembly, monomer. Interacts with BrxC. Post-translationally, phosphorylated on Thr-385 in vitro by PrkC in the presence of poly-L-lysine or myelin basic protein, dephosphorylated by PrpC.

It is found in the cytoplasm. The catalysed reaction is GTP + H2O = GDP + phosphate + H(+). Functionally, GTP hydrolase that promotes the GTP-dependent binding of aminoacyl-tRNA to the A-site of ribosomes during protein biosynthesis. This is Elongation factor Tu from Bacillus subtilis (strain 168).